Reading from the N-terminus, the 932-residue chain is Alanine--tRNA ligase, mitochondrial (932 aa).

The disordered stretch occupies residues 458–480 (SRLTWNTSSSSSDQTTQQTTQLP). Over residues 464–478 (TSSSSSDQTTQQTTQ) the composition is skewed to low complexity. The Zn(2+) site is built by H610, H614, C713, and H717.

This sequence belongs to the class-II aminoacyl-tRNA synthetase family. Monomer. Zn(2+) is required as a cofactor.

The protein localises to the mitochondrion. It catalyses the reaction tRNA(Ala) + L-alanine + ATP = L-alanyl-tRNA(Ala) + AMP + diphosphate. In terms of biological role, catalyzes the attachment of alanine to tRNA(Ala) in a two-step reaction: alanine is first activated by ATP to form Ala-AMP and then transferred to the acceptor end of tRNA(Ala). Also edits incorrectly charged tRNA(Ala) via its editing domain. This Dictyostelium discoideum (Social amoeba) protein is Alanine--tRNA ligase, mitochondrial (malaS).